Consider the following 132-residue polypeptide: Small ribosomal subunit protein uS8 (132 aa).

This sequence belongs to the universal ribosomal protein uS8 family. In terms of assembly, part of the 30S ribosomal subunit. Contacts proteins S5 and S12.

One of the primary rRNA binding proteins, it binds directly to 16S rRNA central domain where it helps coordinate assembly of the platform of the 30S subunit. The sequence is that of Small ribosomal subunit protein uS8 from Clavibacter michiganensis subsp. michiganensis (strain NCPPB 382).